A 314-amino-acid chain; its full sequence is Chitinase 1 (314 aa).

Positions 1–26 are cleaved as a signal peptide; it reads MASVSPSSLLLLFFALLSPLLPLTSA. In terms of domain architecture, GH18 spans 27 to 296; the sequence is LVFREYIGSQ…NVFRYEMQAQ (270 aa). Glutamate 151 functions as the Proton donor in the catalytic mechanism.

Belongs to the glycosyl hydrolase 18 family. Chitinase class II subfamily.

The enzyme catalyses Random endo-hydrolysis of N-acetyl-beta-D-glucosaminide (1-&gt;4)-beta-linkages in chitin and chitodextrins.. In terms of biological role, able to cleave glycolchitin. The protein is Chitinase 1 of Tulipa saxatilis subsp. bakeri (Tulip).